A 520-amino-acid chain; its full sequence is Alkyl hydroperoxide reductase subunit F (520 aa).

FAD is bound at residue 213 to 228; that stretch reads DVLVVGGGPAGAAAAI. A disulfide bond links cysteine 343 and cysteine 346. 355-369 contacts NAD(+); it reads RVAVIGGGNSGVEAA. 476–486 lines the FAD pocket; the sequence is TSIPGVFAAGD.

Belongs to the class-II pyridine nucleotide-disulfide oxidoreductase family. Homodimer. FAD serves as cofactor.

In terms of biological role, serves to protect the cell against DNA damage by alkyl hydroperoxides. It can use either NADH or NADPH as electron donor for direct reduction of redox dyes or of alkyl hydroperoxides when combined with the AhpC protein. The protein is Alkyl hydroperoxide reductase subunit F (ahpF) of Pseudomonas putida (Arthrobacter siderocapsulatus).